Reading from the N-terminus, the 342-residue chain is N-acetyl-gamma-glutamyl-phosphate reductase (342 aa).

Cys146 is a catalytic residue.

The protein belongs to the NAGSA dehydrogenase family. Type 1 subfamily.

The protein localises to the cytoplasm. The catalysed reaction is N-acetyl-L-glutamate 5-semialdehyde + phosphate + NADP(+) = N-acetyl-L-glutamyl 5-phosphate + NADPH + H(+). Its pathway is amino-acid biosynthesis; L-arginine biosynthesis; N(2)-acetyl-L-ornithine from L-glutamate: step 3/4. Its function is as follows. Catalyzes the NADPH-dependent reduction of N-acetyl-5-glutamyl phosphate to yield N-acetyl-L-glutamate 5-semialdehyde. The polypeptide is N-acetyl-gamma-glutamyl-phosphate reductase (Frankia casuarinae (strain DSM 45818 / CECT 9043 / HFP020203 / CcI3)).